A 33-amino-acid chain; its full sequence is Imperacalcin (33 aa).

Disulfide bonds link Cys3-Cys17, Cys10-Cys21, and Cys16-Cys32. Important for stimulation of [3H]ryanodine binding to RYR1 regions lie at residues 8-9 (KR) and 19-20 (KK). The tract at residues 22–24 (KRR) is essential for stimulation of [3H]ryanodine binding to RYR1. The important for stimulation of [3H]ryanodine binding to RYR1 stretch occupies residues 25 to 27 (GTN).

The protein belongs to the scorpion calcin family. Expressed by the venom gland.

The protein localises to the secreted. Its function is as follows. This toxin affects the activity of ryanodine receptors 1, 2 and 3 (RyR1, RyR2 and RyR3). At lower concentrations the toxin increases full openings of the RyRs, and at higher concentrations it inhibits full openings and induces openings to subconductance levels (30% of the full conductance state) and reduces the number of full conductance openings. The different actions may be attributed to the toxins binding at different sites on the RyRs, with binding at a high-affinity site mediating the increase in full openings and the induction of subconductance states evoked upon binding to a lower-affinity site. Furthermore, it triggers calcium release from sarcoplasmic vesicles (11.7 nM are enough to induce a sharp release, and 70% of the total calcium is released after toxin (100 nM) addition) probably by acting as a cell-penetrating peptide (CPP). In addition, it has been shown to dose-dependently stimulate ryanodine binding to RyR1 (EC(50)=8.7 nM). It also augments the bell-shaped calcium-[3H]ryanodine binding curve that is maximal at about 10 uM calcium concentration. It binds a different site as ryanodine. It acts synergistically with caffeine. In vivo, intracerebroventricular injection into mice induces neurotoxic symptoms, followed by death. The protein is Imperacalcin of Pandinus imperator (Emperor scorpion).